Here is a 97-residue protein sequence, read N- to C-terminus: MRLSYILVVVIAVTLQACVCAIPVIKEANQVMLANGPLPSIVNTEGGRLLRGVKKRTAEREVQEERMSGAKLSEKGKQFLKWFFRGSDTRVKGRSWR.

Residues 1–21 form the signal peptide; that stretch reads MRLSYILVVVIAVTLQACVCA. Positions 48-66 match the RxLR-dEER motif; sequence RLLRGVKKRTAEREVQEER.

This sequence belongs to the RxLR effector family.

It localises to the secreted. The protein resides in the host cell. In terms of biological role, effector that is involved in host plant infection. Contributes to virulence during the early infection stage, by inhibiting plant defense responses induced by both PAMP-triggered immunity (PTI) and effector-triggered immunity (ETI). In Phytophthora infestans (strain T30-4) (Potato late blight agent), this protein is RxLR effector protein CRE10.